The chain runs to 408 residues: Dual-specificity RNA methyltransferase RlmN (408 aa).

Glu-93 functions as the Proton acceptor in the catalytic mechanism. The 281-residue stretch at 99-379 (ETNRGTLCIS…TTTRKTRGDD (281 aa)) folds into the Radical SAM core domain. Cysteines 106 and 384 form a disulfide. Residues Cys-113, Cys-117, and Cys-120 each contribute to the [4Fe-4S] cluster site. A disordered region spans residues 152 to 196 (SPAGSKDGDGGPDHASRATKLDHRAADAKGVQSDSWRSSDPEEDH). The segment covering 157–178 (KDGDGGPDHASRATKLDHRAAD) has biased composition (basic and acidic residues). S-adenosyl-L-methionine is bound by residues 210–211 (GE), Ser-242, 264–266 (SLH), and Asn-341. The S-methylcysteine intermediate role is filled by Cys-384.

The protein belongs to the radical SAM superfamily. RlmN family. [4Fe-4S] cluster serves as cofactor.

It is found in the cytoplasm. It catalyses the reaction adenosine(2503) in 23S rRNA + 2 reduced [2Fe-2S]-[ferredoxin] + 2 S-adenosyl-L-methionine = 2-methyladenosine(2503) in 23S rRNA + 5'-deoxyadenosine + L-methionine + 2 oxidized [2Fe-2S]-[ferredoxin] + S-adenosyl-L-homocysteine. The enzyme catalyses adenosine(37) in tRNA + 2 reduced [2Fe-2S]-[ferredoxin] + 2 S-adenosyl-L-methionine = 2-methyladenosine(37) in tRNA + 5'-deoxyadenosine + L-methionine + 2 oxidized [2Fe-2S]-[ferredoxin] + S-adenosyl-L-homocysteine. In terms of biological role, specifically methylates position 2 of adenine 2503 in 23S rRNA and position 2 of adenine 37 in tRNAs. m2A2503 modification seems to play a crucial role in the proofreading step occurring at the peptidyl transferase center and thus would serve to optimize ribosomal fidelity. This Aromatoleum aromaticum (strain DSM 19018 / LMG 30748 / EbN1) (Azoarcus sp. (strain EbN1)) protein is Dual-specificity RNA methyltransferase RlmN.